A 115-amino-acid polypeptide reads, in one-letter code: Large ribosomal subunit protein bL19 (115 aa).

The protein belongs to the bacterial ribosomal protein bL19 family.

Functionally, this protein is located at the 30S-50S ribosomal subunit interface and may play a role in the structure and function of the aminoacyl-tRNA binding site. The sequence is that of Large ribosomal subunit protein bL19 from Oleidesulfovibrio alaskensis (strain ATCC BAA-1058 / DSM 17464 / G20) (Desulfovibrio alaskensis).